The primary structure comprises 186 residues: Imidazoleglycerol-phosphate dehydratase (186 aa).

It belongs to the imidazoleglycerol-phosphate dehydratase family.

The protein localises to the cytoplasm. It catalyses the reaction D-erythro-1-(imidazol-4-yl)glycerol 3-phosphate = 3-(imidazol-4-yl)-2-oxopropyl phosphate + H2O. It participates in amino-acid biosynthesis; L-histidine biosynthesis; L-histidine from 5-phospho-alpha-D-ribose 1-diphosphate: step 6/9. The sequence is that of Imidazoleglycerol-phosphate dehydratase from Dictyoglomus turgidum (strain DSM 6724 / Z-1310).